Consider the following 278-residue polypeptide: Elongation factor Ts (278 aa).

Residues 82-85 are involved in Mg(2+) ion dislocation from EF-Tu; sequence TDFV.

It belongs to the EF-Ts family.

Its subcellular location is the cytoplasm. Associates with the EF-Tu.GDP complex and induces the exchange of GDP to GTP. It remains bound to the aminoacyl-tRNA.EF-Tu.GTP complex up to the GTP hydrolysis stage on the ribosome. The polypeptide is Elongation factor Ts (Streptomyces avermitilis (strain ATCC 31267 / DSM 46492 / JCM 5070 / NBRC 14893 / NCIMB 12804 / NRRL 8165 / MA-4680)).